Reading from the N-terminus, the 275-residue chain is Malonyl-[acyl-carrier protein] O-methyltransferase (275 aa).

It belongs to the methyltransferase superfamily.

The enzyme catalyses malonyl-[ACP] + S-adenosyl-L-methionine = malonyl-[ACP] methyl ester + S-adenosyl-L-homocysteine. The protein operates within cofactor biosynthesis; biotin biosynthesis. In terms of biological role, converts the free carboxyl group of a malonyl-thioester to its methyl ester by transfer of a methyl group from S-adenosyl-L-methionine (SAM). It allows to synthesize pimeloyl-ACP via the fatty acid synthetic pathway. The polypeptide is Malonyl-[acyl-carrier protein] O-methyltransferase (Methylococcus capsulatus (strain ATCC 33009 / NCIMB 11132 / Bath)).